We begin with the raw amino-acid sequence, 235 residues long: Acyl-protein thioesterase 1 (235 aa).

Residues serine 125, aspartate 181, and histidine 213 each act as charge relay system in the active site.

It belongs to the AB hydrolase superfamily. AB hydrolase 2 family.

Its subcellular location is the cytoplasm. It is found in the nucleus. It catalyses the reaction S-hexadecanoyl-L-cysteinyl-[protein] + H2O = L-cysteinyl-[protein] + hexadecanoate + H(+). Hydrolyzes fatty acids from S-acylated cysteine residues in proteins with a strong preference for palmitoylated G-alpha proteins over other acyl substrates. Mediates the deacylation of G-alpha proteins such as GPA1 in vivo, but has weak or no activity toward palmitoylated Ras proteins. Has weak lysophospholipase activity in vitro; however such activity may not exist in vivo. This is Acyl-protein thioesterase 1 from Gibberella zeae (strain ATCC MYA-4620 / CBS 123657 / FGSC 9075 / NRRL 31084 / PH-1) (Wheat head blight fungus).